A 1806-amino-acid polypeptide reads, in one-letter code: MQLSRAAAAAAAAPAEPPEPLSPAPAPAPAPPGPLPRSAADGAPAGGKGGPGRRAESPGAPFPGASGPGPGPGAGMDGPGASAVVVRVGIPDLQQTKCLRLDPAAPVWAAKQRVLCALNHSLQDALNYGLFQPPSRGRAGKFLDEERLLQEYPPNLDTPLPYLEFRYKRRVYAQNLIDDKQFAKLHTKANLKKFMDYVQLHSTDKVARLLDKGLDPNFHDPDSGECPLSLAAQLDNATDLLKVLKNGGAHLDFRTRDGLTAVHCATRQRNAAALTTLLDLGASPDYKDSRGLTPLYHSALGGGDALCCELLLHDHAQLGITDENGWQEIHQACRFGHVQHLEHLLFYGADMGAQNASGNTALHICALYNQESCARVLLFRGANRDVRNYNSQTAFQVAIIAGNFELAEVIKTHKDSDVVPFRETPSYAKRRRLAGPSGLASPRPLQRSASDINLKGEAQPAASPGPSLRSLPHQLLLQRLQEEKDRDRDADQESNISGPLAGRAGQSKISPSGPGGPGPAPGPGPAPPAPPAPPPRGPKRKLYSAVPGRKFIAVKAHSPQGEGEIPLHRGEAVKVLSIGEGGFWEGTVKGRTGWFPADCVEEVQMRQHDTRPETREDRTKRLFRHYTVGSYDSLTSHSDYVIDDKVAVLQKRDHEGFGFVLRGAKAETPIEEFTPTPAFPALQYLESVDVEGVAWRAGLRTGDFLIEVNGVNVVKVGHKQVVALIRQGGNRLVMKVVSVTRKPEEDGARRRAPPPPKRAPSTTLTLRSKSMTAELEELASIRRRKGEKLDEMLAAAAEPTLRPDIADADSRAATVKQRPTSRRITPAEISSLFERQGLPGPEKLPGSLRKGIPRTKSVGEDEKLASLLEGRFPRSTSMQDPVREGRGIPPPPQTAPPPPPAPYYFDSGPPPAFSPPPPPGRAYDTVRSSFKPGLEARLGAGAAGLYEPGAALGPLPYPERQKRARSMIILQDSAPESGDAPRPPPAATPPERPKRRPRPPGPDSPYANLGAFSASLFAPSKPQRRKSPLVKQLQVEDAQERAALAVGSPGPGGGSFAREPSPTHRGPRPGGLDYGAGDGPGLAFGGPGPAKDRRLEERRRSTVFLSVGAIEGSAPGADLPSLQPSRSIDERLLGTGPTAGRDLLLPSPVSALKPLVSGPSLGPSGSTFIHPLTGKPLDPSSPLALALAARERALASQAPSRSPTPVHSPDADRPGPLFVDVQARDPERGSLASPAFSPRSPAWIPVPARREAEKVPREERKSPEDKKSMILSVLDTSLQRPAGLIVVHATSNGQEPSRLGGAEEERPGTPELAPAPMQSAAVAEPLPSPRAQPPGGTPADAGPGQGSSEEEPELVFAVNLPPAQLSSSDEETREELARIGLVPPPEEFANGVLLATPLAGPGPSPTTVPSPASGKPSSEPPPAPESAADSGVEEADTRSSSDPHLETTSTISTVSSMSTLSSESGELTDTHTSFADGHTFLLEKPPVPPKPKLKSPLGKGPVTFRDPLLKQSSDSELMAQQHHAASAGLASAAGPARPRYLFQRRSKLWGDPVESRGLPGPEDDKPTVISELSSRLQQLNKDTRSLGEEPVGGLGSLLDPAKKSPIAAARLFSSLGELSSISAQRSPGGPGGGASYSVRPSGRYPVARRAPSPVKPASLERVEGLGAGAGGAGRPFGLTPPTILKSSSLSIPHEPKEVRFVVRSVSARSRSPSPSPLPSPASGPGPGAPGPRRPFQQKPLQLWSKFDVGDWLESIHLGEHRDRFEDHEIEGAHLPALTKDDFVELGVTRVGHRMNIERALRQLDGS.

The intramolecular interaction with the ANK repeats stretch occupies residues 76-150; it reads MDGPGASAVV…KFLDEERLLQ (75 aa). At Tyr197 the chain carries Phosphotyrosine. ANK repeat units lie at residues 223–253, 257–286, 290–320, 324–353, 357–386, and 390–420; these read SGEC…HLDF, DGLT…SPDY, RGLT…QLGI, NGWQ…DMGA, SGNT…NRDV, and NSQT…DVVP. Positions 407–416 are enriched in basic and acidic residues; sequence AEVIKTHKDS. Residues 407 to 467 are disordered; the sequence is AEVIKTHKDS…AQPAASPGPS (61 aa). Pro residues predominate over residues 439-461; sequence LASPRPLQRSASDINLKGEAQPA. 5 positions are modified to phosphoserine: Ser448, Ser450, Ser463, Ser470, and Ser558. Residues 546 to 605 enclose the SH3 domain; it reads VPGRKFIAVKAHSPQGEGEIPLHRGEAVKVLSIGEGGFWEGTVKGRTGWFPADCVEEVQM. Tyr631 is modified (phosphotyrosine). The 95-residue stretch at 646-740 folds into the PDZ domain; it reads VAVLQKRDHE…RLVMKVVSVT (95 aa). Disordered regions lie at residues 665–689 and 760–853; these read KAET…ESVD and PSTT…KGIP. Positions 753–760 are required for interaction with ABI1; it reads PPPPKRAP. Residue Ser770 is modified to Phosphoserine. Positions 813–845 are enriched in pro residues; that stretch reads ATVKQRPTSRRITPAEISSLFERQGLPGPEKLP. Phosphoserine occurs at positions 857, 866, and 877. Residues 871–1021 form a disordered region; that stretch reads RFPRSTSMQD…FSASLFAPSK (151 aa). Residues 906 to 915 show a composition bias toward pro residues; sequence DSGPPPAFSP. A phosphoserine mark is found at Ser966 and Ser973. Thr988 is modified (phosphothreonine). The span at 993–1013 shows a compositional bias: gly residues; the sequence is PKRRPRPPGPDSPYANLGAFS. Residue Tyr1006 is modified to Phosphotyrosine. An Asymmetric dimethylarginine modification is found at Arg1041. The span at 1115–1124 shows a compositional bias: low complexity; sequence PGADLPSLQP. Disordered regions lie at residues 1115 to 1460, 1475 to 1525, and 1546 to 1584; these read PGAD…MSTL, ADGH…HHAA, and SKLW…KDTR. Basic and acidic residues predominate over residues 1173-1193; it reads TGKPLDPSSPLALALAARERA. Thr1204 carries the post-translational modification Phosphothreonine. Phosphoserine occurs at positions 1208, 1233, 1237, and 1240. Positions 1251–1261 are enriched in pro residues; it reads EAEKVPREERK. Thr1309 carries the phosphothreonine modification. Phosphoserine is present on Ser1328. The segment covering 1360–1370 has biased composition (basic and acidic residues); it reads LPPAQLSSSDE. Low complexity-rich tracts occupy residues 1371-1392 and 1444-1460; these read ETRE…ANGV and HLET…MSTL. An SH3-binding motif is present at residues 1485–1491; the sequence is PPVPPKP. Phosphoserine is present on Ser1495. Residues 1495–1505 are compositionally biased toward polar residues; that stretch reads SPLGKGPVTFR. Residues 1569–1589 adopt a coiled-coil conformation; it reads ISELSSRLQQLNKDTRSLGEE. 4 positions are modified to phosphoserine: Ser1585, Ser1596, Ser1604, and Ser1614. The span at 1627–1637 shows a compositional bias: low complexity; it reads PGGPGGGASYS. Positions 1627 to 1664 are disordered; it reads PGGPGGGASYSVRPSGRYPVARRAPSPVKPASLERVEG. Residues 1638 to 1657 show a composition bias toward pro residues; it reads VRPSGRYPVARRAPSPVKPA. Phosphoserine is present on residues Ser1709, Ser1711, and Ser1713. Positions 1743 to 1806 constitute an SAM domain; sequence WSKFDVGDWL…ERALRQLDGS (64 aa).

May homomultimerize via its SAM domain. Interacts with BAIAP2, DBNL and SLC17A7/VGLUT1. Interacts with DLGAP1/GKAP, GRM1/MGLUR1, GRM5/MGLUR5 and LZTS3 C-termini via its PDZ domain. Interacts with ABI1, HOMER1, HOMER2, HOMER3 and CTTN/cortactin SH3 domain. Is part of a complex with DLG4/PSD-95 and DLGAP1/GKAP. Interacts (via PDZ domain) with the GRIA1 subunit of the AMPA receptor (via PDZ-binding motif). Interacts with WASF1 and CYFIP2; the interactions mediate the association of SHANK3 with the WAVE1 complex. Interacts with ARPC2; the interaction probably mediates the association of SHANK3 with the Arp2/3 complex. Interacts (via ANK repeats) with SHARPIN and SPTAN1. Interacts (via PDZ domain) with ARHGAP44 (probably via PDZ-binding motif); the interaction takes place in dendritic spines and promotes GRIA1 exocytosis. Interacts with CAMK2A. Interacts with DIP2A. Interacts with ADGRL3. Expressed in the cerebral cortex and the cerebellum.

Its subcellular location is the cytoplasm. The protein localises to the postsynaptic density. The protein resides in the cell projection. It localises to the dendritic spine. Its function is as follows. Major scaffold postsynaptic density protein which interacts with multiple proteins and complexes to orchestrate the dendritic spine and synapse formation, maturation and maintenance. Interconnects receptors of the postsynaptic membrane including NMDA-type and metabotropic glutamate receptors via complexes with GKAP/PSD-95 and HOMER, respectively, and the actin-based cytoskeleton. Plays a role in the structural and functional organization of the dendritic spine and synaptic junction through the interaction with Arp2/3 and WAVE1 complex as well as the promotion of the F-actin clusters. By way of this control of actin dynamics, participates in the regulation of developing neurons growth cone motility and the NMDA receptor-signaling. Also modulates GRIA1 exocytosis and GRM5/MGLUR5 expression and signaling to control the AMPA and metabotropic glutamate receptor-mediated synaptic transmission and plasticity. May be required at an early stage of synapse formation and be inhibited by IGF1 to promote synapse maturation. This chain is SH3 and multiple ankyrin repeat domains protein 3 (SHANK3), found in Homo sapiens (Human).